The primary structure comprises 156 residues: Small ribosomal subunit protein uS7 (156 aa).

The protein belongs to the universal ribosomal protein uS7 family. Part of the 30S ribosomal subunit. Contacts proteins S9 and S11.

Its function is as follows. One of the primary rRNA binding proteins, it binds directly to 16S rRNA where it nucleates assembly of the head domain of the 30S subunit. Is located at the subunit interface close to the decoding center, probably blocks exit of the E-site tRNA. The polypeptide is Small ribosomal subunit protein uS7 (Roseobacter denitrificans (strain ATCC 33942 / OCh 114) (Erythrobacter sp. (strain OCh 114))).